Here is a 214-residue protein sequence, read N- to C-terminus: ATP-dependent Clp protease proteolytic subunit (214 aa).

S113 serves as the catalytic Nucleophile. H138 is a catalytic residue.

It belongs to the peptidase S14 family. Fourteen ClpP subunits assemble into 2 heptameric rings which stack back to back to give a disk-like structure with a central cavity, resembling the structure of eukaryotic proteasomes.

Its subcellular location is the cytoplasm. It carries out the reaction Hydrolysis of proteins to small peptides in the presence of ATP and magnesium. alpha-casein is the usual test substrate. In the absence of ATP, only oligopeptides shorter than five residues are hydrolyzed (such as succinyl-Leu-Tyr-|-NHMec, and Leu-Tyr-Leu-|-Tyr-Trp, in which cleavage of the -Tyr-|-Leu- and -Tyr-|-Trp bonds also occurs).. Its function is as follows. Cleaves peptides in various proteins in a process that requires ATP hydrolysis. Has a chymotrypsin-like activity. Plays a major role in the degradation of misfolded proteins. The protein is ATP-dependent Clp protease proteolytic subunit of Teredinibacter turnerae (strain ATCC 39867 / T7901).